A 184-amino-acid chain; its full sequence is Tumor necrosis factor alpha-induced protein 8-like protein 2 (184 aa).

The residue at position 3 (Ser-3) is a Phosphoserine.

This sequence belongs to the TNFAIP8 family. TNFAIP8L2 subfamily. May interact with CASP8; however, such result is unclear since could not reproduce the interaction with CASP8. Interacts with RAC1. In terms of processing, phosphorylated by TAK1/MAP3K7; this phosphorylation triggers association with BTRC and subsequent ubiquitination and degradation. Post-translationally, ubiquitinated in a BTRC-depdent manner; leading to degradation mediated through the proteasome pathway. In terms of tissue distribution, expressed in thymus, spleen, lymph node and small intestine, but not in liver, heart, muscle, testis, spinal cord or brain. Up-regulated in the spinal cord of mice with experimental autoimmune encephalomyelitis. Constitutively expressed by macrophages, B and T-lymphocytes at various developmental stages.

Its subcellular location is the cytoplasm. It localises to the nucleus. The protein resides in the lysosome. Acts as a negative regulator of innate and adaptive immunity by maintaining immune homeostasis. Plays a regulatory role in the Toll-like signaling pathway by determining the strength of LPS-induced signaling and gene expression. Inhibits TCR-mediated T-cell activation and negatively regulate T-cell function to prevent hyperresponsiveness. Also inhibits autolysosome formation via negatively modulating MTOR activation by interacting with RAC1 and promoting the disassociation of the RAC1-MTOR complex. Plays an essential role in NK-cell biology by acting as a checkpoint and displaying an expression pattern correlating with NK-cell maturation process and by negatively regulating NK-cell maturation and antitumor immunity. Mechanistically, suppresses IL-15-triggered mTOR activity in NK-cells. The polypeptide is Tumor necrosis factor alpha-induced protein 8-like protein 2 (Tnfaip8l2) (Mus musculus (Mouse)).